A 570-amino-acid chain; its full sequence is MTQKHPQTLVVDAPLSDAERLKRESNFLRGTIAEDLNDGLTGGFNGDNSTLIRFHGMYQQDDRDIRAERAEEKLEPRYAMMLRCRLPGGIISPEQWLKMDSFASEKTLYGSIRLTNRQTFQFHGILKKDLKTVHHLLHESGLDSLATANDVNRNVLCTSNPVESDLHAEAYEWAKKISEHLLPQTHAYAEIWLDQEKLATTDQEPILGATYLPRKFKTTVVIPPQNDVDIYANDLNFIAISENDQLVGFNVLIGGGLSITIGDKTTHPGVAKDIGYIEKEKVLAVAEAVVTTQRDWGNRSNRKNARLRYTLERVGLDVFKAEVEKRAGVTFEASRPFTLTGRGDRFGWVKGIDNQWHLTLFVENGRLLDYPHRPLKSGIAEIAKVHKGDFRLTANQNLIVAGVSEEDKDTIEKIARDHGLLENISELRKNSMACVSFPTCPLAMAEAERFLPNFLTKVEAVMTKYDIADEYIVFRTTGCPNNCGRSLLAEIGLVGRAIGRYNLYIGGDRVGTRIPRLFRENITEDEILSEVDSLIGRWAKERDGKEAFGDFVVRAGIVKAVTDPAIDFYD.

4 residues coordinate [4Fe-4S] cluster: cysteine 434, cysteine 440, cysteine 479, and cysteine 483. A siroheme-binding site is contributed by cysteine 483.

Belongs to the nitrite and sulfite reductase 4Fe-4S domain family. As to quaternary structure, alpha(8)-beta(8). The alpha component is a flavoprotein, the beta component is a hemoprotein. Siroheme serves as cofactor. The cofactor is [4Fe-4S] cluster.

The enzyme catalyses hydrogen sulfide + 3 NADP(+) + 3 H2O = sulfite + 3 NADPH + 4 H(+). It participates in sulfur metabolism; hydrogen sulfide biosynthesis; hydrogen sulfide from sulfite (NADPH route): step 1/1. Component of the sulfite reductase complex that catalyzes the 6-electron reduction of sulfite to sulfide. This is one of several activities required for the biosynthesis of L-cysteine from sulfate. This chain is Sulfite reductase [NADPH] hemoprotein beta-component, found in Zymomonas mobilis subsp. mobilis (strain ATCC 31821 / ZM4 / CP4).